A 215-amino-acid polypeptide reads, in one-letter code: Cytochrome b6 (215 aa).

A helical transmembrane segment spans residues 32–52; the sequence is IFYCLGGVTLVCFIIQFATGF. Cysteine 35 provides a ligand contact to heme c. Positions 86 and 100 each coordinate heme b. 3 helical membrane passes run 90-110, 116-136, and 186-206; these read ASMM…TGGF, LTWI…VTGY, and LHTF…FLMI. Heme b-binding residues include histidine 187 and histidine 202.

The protein belongs to the cytochrome b family. PetB subfamily. In terms of assembly, the 4 large subunits of the cytochrome b6-f complex are cytochrome b6, subunit IV (17 kDa polypeptide, PetD), cytochrome f and the Rieske protein, while the 4 small subunits are PetG, PetL, PetM and PetN. The complex functions as a dimer. Requires heme b as cofactor. It depends on heme c as a cofactor.

The protein resides in the cellular thylakoid membrane. Component of the cytochrome b6-f complex, which mediates electron transfer between photosystem II (PSII) and photosystem I (PSI), cyclic electron flow around PSI, and state transitions. In Acaryochloris marina (strain MBIC 11017), this protein is Cytochrome b6.